Here is a 743-residue protein sequence, read N- to C-terminus: MATKFPKFSQDLAQDPTTRRIWYAMATGNDFESHDGMTEENLYQKIFATHFGHVAIIFLWASSLLFHVAWQGNFEQWIKDPIHIRPIAHAIWDPQFGKPAIEAFTQGGANYPVNISYSGIYHWWYTIGMRTNNDLYMGAVFLLILASVFLFAGWLHLQPKFRPSLSWFKSAEPRLNHHLAGLFGVSSLAWAGHLIHVAIPESRGQHVGWNNFLSTLPHPAGLQPFFTGNWGVYASDPDTANHVFGTSQGAGTAILTFLGGFHPQTESLWLTDMAHHHLAIAVIFIIAGHMYRTNFGIGHSIKEMLNSKAGLVPGTNSEGQFNLPHQGLYDTYNNSLHFQLGIHLAALGTITSLVAQHMYAMPPYAFIAKDYTTQAALYTHHQYIAIFLMLGAFAHGAIFWVRDYDPEQNKGNVLDRVLKHKEAIISHLSWVSLFLGFHTLGLYVHNDVVVAFGTPEKQILIEPVFAQFIQASHGKVLYGLNVLLSNPDSVAYTAYPNYGNVWLQGWLDAINSGTNSLFLTIGPGDFLVHHAFALALHTTVLILVKGALDARGSKLMPDKKDFGYAFPCDGPGRGGTCDISAWDAFYLATFWALNTVGWVTFYWHWKHLGIWQGNVAQFNESSTYLMGWFRDYLWANSAQLINGYNPYGMNNLSVWAWMFLFGHLVWATGFMFLISWRGYWQELIETLVWAHERTPLANLVRWKDKPVALSIVQARLVGLTHFTVGYVLTYAAFLIASTAGKFG.

Helical transmembrane passes span 46-69 (IFATHFGHVAIIFLWASSLLFHVA), 135-158 (LYMGAVFLLILASVFLFAGWLHLQ), 175-199 (LNHHLAGLFGVSSLAWAGHLIHVAI), 273-291 (MAHHHLAIAVIFIIAGHMY), 336-359 (LHFQLGIHLAALGTITSLVAQHMY), 375-401 (AALYTHHQYIAIFLMLGAFAHGAIFWV), 423-445 (AIISHLSWVSLFLGFHTLGLYVH), and 526-544 (FLVHHAFALALHTTVLILV). [4Fe-4S] cluster-binding residues include C568 and C577. Helical transmembrane passes span 584-605 (AFYLATFWALNTVGWVTFYWHW) and 652-674 (LSVWAWMFLFGHLVWATGFMFLI). The chlorophyll a site is built by H663, M671, and Y679. Residue W680 coordinates phylloquinone. The helical transmembrane segment at 716 to 736 (LVGLTHFTVGYVLTYAAFLIA) threads the bilayer.

It belongs to the PsaA/PsaB family. As to quaternary structure, the PsaA/B heterodimer binds the P700 chlorophyll special pair and subsequent electron acceptors. PSI consists of a core antenna complex that captures photons, and an electron transfer chain that converts photonic excitation into a charge separation. The cyanobacterial PSI reaction center is composed of one copy each of PsaA,B,C,D,E,F,I,J,K,L,M and X, and forms trimeric complexes. The cofactor is PSI electron transfer chain: 5 chlorophyll a, 1 chlorophyll a', 2 phylloquinones and 3 4Fe-4S clusters. PSI core antenna: 90 chlorophyll a, 22 carotenoids, 3 phospholipids and 1 galactolipid. P700 is a chlorophyll a/chlorophyll a' dimer, A0 is one or more chlorophyll a, A1 is one or both phylloquinones and FX is a shared 4Fe-4S iron-sulfur center..

The protein resides in the cellular thylakoid membrane. It carries out the reaction reduced [plastocyanin] + hnu + oxidized [2Fe-2S]-[ferredoxin] = oxidized [plastocyanin] + reduced [2Fe-2S]-[ferredoxin]. PsaA and PsaB bind P700, the primary electron donor of photosystem I (PSI), as well as the electron acceptors A0, A1 and FX. PSI is a plastocyanin/cytochrome c6-ferredoxin oxidoreductase, converting photonic excitation into a charge separation, which transfers an electron from the donor P700 chlorophyll pair to the spectroscopically characterized acceptors A0, A1, FX, FA and FB in turn. Oxidized P700 is reduced on the lumenal side of the thylakoid membrane by plastocyanin or cytochrome c6. The chain is Photosystem I P700 chlorophyll a apoprotein A2 from Mastigocladus laminosus (Fischerella sp.).